The sequence spans 578 residues: SCARECROW-LIKE protein 7 (578 aa).

Residues 18-29 show a composition bias toward low complexity; it reads VIQQQQQQQQQQ. Disordered stretches follow at residues 18 to 84 and 146 to 173; these read VIQQ…LAYG and PPPP…APRP. Positions 49 to 61 are enriched in basic residues; that stretch reads PHHHQQKHHHHHQ. Residues 62–74 show a composition bias toward low complexity; that stretch reads QMPAMPQAPPSSH. Over residues 146-156 the composition is skewed to pro residues; sequence PPPPVPSPPPT. Residues 157–173 are compositionally biased toward low complexity; the sequence is HAAATATATAATAAPRP. Positions 198 to 578 constitute a GRAS domain; it reads SADASCSAPI…RPLLTVSAWR (381 aa). Residues 205 to 264 form a leucine repeat I (LRI) region; it reads APILQSLLSCSRAAATDPGLAAAELASVRAAATDAGDPSERLAFYFADALSRRLACGTGA. The tract at residues 283-349 is VHIID; the sequence is YKTLNDACPY…GKPTRIRITG (67 aa). Residues 314–318 carry the VHIID motif; it reads IHIVD. Residues 365 to 397 are leucine repeat II (LRII); it reads ATNTRLRDFAKLLGVDFEFVPLLRPVHELNKSD. Residues 406-497 form a PFYRE region; it reads VAVNFMLQLY…RWMFGERIQR (92 aa). The short motif at 414 to 418 is the LXXLL motif element; the sequence is LYHLL. The interval 500-578 is SAW; that stretch reads GPEEGADRTE…RPLLTVSAWR (79 aa).

The protein belongs to the GRAS family. As to quaternary structure, homodimer.

It localises to the nucleus. Its function is as follows. Probable transcription factor involved in plant development. Involved in environmental abiotic stress resistance. May increase the expression of stress-responsive genes. Binds DNA in vitro. The sequence is that of SCARECROW-LIKE protein 7 from Oryza sativa subsp. japonica (Rice).